A 529-amino-acid polypeptide reads, in one-letter code: Bifunctional purine biosynthesis protein PurH (529 aa).

Positions 1–148 constitute an MGS-like domain; sequence MQQRRPVRRA…KNHKDVAIVV (148 aa).

It belongs to the PurH family.

The enzyme catalyses (6R)-10-formyltetrahydrofolate + 5-amino-1-(5-phospho-beta-D-ribosyl)imidazole-4-carboxamide = 5-formamido-1-(5-phospho-D-ribosyl)imidazole-4-carboxamide + (6S)-5,6,7,8-tetrahydrofolate. It catalyses the reaction IMP + H2O = 5-formamido-1-(5-phospho-D-ribosyl)imidazole-4-carboxamide. The protein operates within purine metabolism; IMP biosynthesis via de novo pathway; 5-formamido-1-(5-phospho-D-ribosyl)imidazole-4-carboxamide from 5-amino-1-(5-phospho-D-ribosyl)imidazole-4-carboxamide (10-formyl THF route): step 1/1. Its pathway is purine metabolism; IMP biosynthesis via de novo pathway; IMP from 5-formamido-1-(5-phospho-D-ribosyl)imidazole-4-carboxamide: step 1/1. The sequence is that of Bifunctional purine biosynthesis protein PurH from Salmonella paratyphi A (strain ATCC 9150 / SARB42).